Consider the following 346-residue polypeptide: GTPase Obg (346 aa).

Positions 1–159 (MRFVDRCRLK…RELRLELKVL (159 aa)) constitute an Obg domain. Residues 122–147 (KGGRGNLHFKSPHDRAPRRAEPGEPG) are disordered. The segment covering 132–147 (SPHDRAPRRAEPGEPG) has biased composition (basic and acidic residues). One can recognise an OBG-type G domain in the interval 160 to 336 (ADVGLLGFPN…LVRELAALAR (177 aa)). GTP-binding positions include 166 to 173 (GFPNAGKS), 191 to 195 (FTTLT), 218 to 221 (DIPG), 288 to 291 (TKAD), and 317 to 319 (SAA). Mg(2+) contacts are provided by S173 and T193.

This sequence belongs to the TRAFAC class OBG-HflX-like GTPase superfamily. OBG GTPase family. In terms of assembly, monomer. Requires Mg(2+) as cofactor.

The protein localises to the cytoplasm. Functionally, an essential GTPase which binds GTP, GDP and possibly (p)ppGpp with moderate affinity, with high nucleotide exchange rates and a fairly low GTP hydrolysis rate. Plays a role in control of the cell cycle, stress response, ribosome biogenesis and in those bacteria that undergo differentiation, in morphogenesis control. The chain is GTPase Obg from Sorangium cellulosum (strain So ce56) (Polyangium cellulosum (strain So ce56)).